The sequence spans 408 residues: MAENGDNEKMAALEAKICHQIEYYFGDFNLPRDKFLKEQIKLDEGWVPLEIMIKFNRLNRLTTDFNVIVEALSKSKAELMEISEDKTKIRRSPSKPLPEVTDEYKNDVKNRSVYIKGFPTDATLDDIKEWLEDKGQVLNIQMRRTLHKAFKGSIFVVFDSIESAKKFVETPGQKYKETDLLILFKDDYFAKKNEERKQNKVEAKLRAKQEQEAKQKLEEDAEMKSLEEKIGCLLKFSGDLDDQTCREDLHILFSNHGEIKWIDFVRGAKEGIILFKEKAKEALGKAKDANNGNLQLRNKEVTWEVLEGEVEKEALKKIIEDQQESLNKWKSKGRRFKGKGKGNKAAQPGSGKGKVQFQGKKTKFASDDEHDEHDENGATGPVKRAREETDKEEPASKQQKTENGAGDQ.

Positions 7-99 constitute an HTH La-type RNA-binding domain; the sequence is NEKMAALEAK…RRSPSKPLPE (93 aa). 2 positions are modified to phosphoserine: Ser-92 and Ser-94. An RRM domain is found at 111–187; sequence RSVYIKGFPT…TDLLILFKDD (77 aa). Lys-116 carries the post-translational modification N6-acetyllysine. Thr-120 carries the phosphothreonine modification. An N6-acetyllysine modification is found at Lys-128. Position 225 is a phosphoserine (Ser-225). In terms of domain architecture, xRRM spans 227–348; the sequence is EEKIGCLLKF…KGKGNKAAQP (122 aa). N6-acetyllysine occurs at positions 328, 341, and 360. A compositionally biased stretch (basic residues) spans 329-342; it reads WKSKGRRFKGKGKG. Positions 329 to 408 are disordered; sequence WKSKGRRFKG…QKTENGAGDQ (80 aa). Phosphothreonine is present on Thr-362. Position 366 is a phosphoserine; by CK2 (Ser-366). A compositionally biased stretch (basic and acidic residues) spans 384-395; the sequence is RAREETDKEEPA.

As to quaternary structure, interacts with DDX15. May interact with RUFY1. In terms of processing, phosphorylated. The phosphorylation sites are at the C-terminal part of the protein. The N-terminus is blocked.

The protein localises to the nucleus. Binds to the 3' poly(U) terminus of nascent RNA polymerase III transcripts, protecting them from exonuclease digestion and facilitating their folding and maturation. In case of Coxsackievirus B3 infection, binds to the viral internal ribosome entry site (IRES) and stimulates the IRES-mediated translation. The sequence is that of Lupus La protein (SSB) from Homo sapiens (Human).